The sequence spans 400 residues: Argininosuccinate synthase (400 aa).

Residues 10–18 and Ala-38 contribute to the ATP site; that span reads AYSGGVDTS. Tyr-89 provides a ligand contact to L-citrulline. Position 119 (Gly-119) interacts with ATP. L-aspartate contacts are provided by Thr-121, Asn-125, and Asp-126. Asn-125 lines the L-citrulline pocket. 5 residues coordinate L-citrulline: Arg-129, Ser-177, Ser-186, Glu-262, and Tyr-274.

This sequence belongs to the argininosuccinate synthase family. Type 1 subfamily. In terms of assembly, homotetramer.

Its subcellular location is the cytoplasm. It catalyses the reaction L-citrulline + L-aspartate + ATP = 2-(N(omega)-L-arginino)succinate + AMP + diphosphate + H(+). Its pathway is amino-acid biosynthesis; L-arginine biosynthesis; L-arginine from L-ornithine and carbamoyl phosphate: step 2/3. The polypeptide is Argininosuccinate synthase (Synechococcus elongatus (strain ATCC 33912 / PCC 7942 / FACHB-805) (Anacystis nidulans R2)).